We begin with the raw amino-acid sequence, 1368 residues long: DNA-directed RNA polymerase subunit beta (1368 aa).

Belongs to the RNA polymerase beta chain family. The RNAP catalytic core consists of 2 alpha, 1 beta, 1 beta' and 1 omega subunit. When a sigma factor is associated with the core the holoenzyme is formed, which can initiate transcription.

It catalyses the reaction RNA(n) + a ribonucleoside 5'-triphosphate = RNA(n+1) + diphosphate. In terms of biological role, DNA-dependent RNA polymerase catalyzes the transcription of DNA into RNA using the four ribonucleoside triphosphates as substrates. The chain is DNA-directed RNA polymerase subunit beta from Ralstonia nicotianae (strain ATCC BAA-1114 / GMI1000) (Ralstonia solanacearum).